Reading from the N-terminus, the 385-residue chain is tRNA-specific 2-thiouridylase MnmA (385 aa).

ATP is bound by residues 29–36 and L55; that span reads GLSGGVDS. Residue C116 is the Nucleophile of the active site. Residues C116 and C225 are joined by a disulfide bond. G141 contacts ATP. The tract at residues 175-177 is interaction with tRNA; that stretch reads KDQ. C225 (cysteine persulfide intermediate) is an active-site residue. Residues 330–331 form an interaction with tRNA region; it reads RY.

This sequence belongs to the MnmA/TRMU family.

The protein resides in the cytoplasm. It catalyses the reaction S-sulfanyl-L-cysteinyl-[protein] + uridine(34) in tRNA + AH2 + ATP = 2-thiouridine(34) in tRNA + L-cysteinyl-[protein] + A + AMP + diphosphate + H(+). In terms of biological role, catalyzes the 2-thiolation of uridine at the wobble position (U34) of tRNA, leading to the formation of s(2)U34. In Prochlorococcus marinus (strain AS9601), this protein is tRNA-specific 2-thiouridylase MnmA.